A 216-amino-acid chain; its full sequence is Small ribosomal subunit protein uS3 (216 aa).

Residues 38 to 106 (IRGYLKKKLY…EIIINILEVR (69 aa)) enclose the KH type-2 domain.

This sequence belongs to the universal ribosomal protein uS3 family. In terms of assembly, part of the 30S ribosomal subunit. Forms a tight complex with proteins S10 and S14.

In terms of biological role, binds the lower part of the 30S subunit head. Binds mRNA in the 70S ribosome, positioning it for translation. The protein is Small ribosomal subunit protein uS3 of Syntrophus aciditrophicus (strain SB).